The following is a 98-amino-acid chain: Protein PROLINE CONTENT ALTERNATIVE 22 (98 aa).

In terms of tissue distribution, mainly expressed in flowers, to a lower extent, in roots and, at very low levels, in leaves and stems.

It localises to the cytoplasm. Functionally, acts as an opponent to RZF1 during early seedling growth in term of proline accumulation in response to dehydration and abscisic acid (ABA). Confers sensitivity to abiotic stresses such as ABA, drought and osmotic stress (e.g. mannitol treatment) by preventing proline accumulation and by reducing the expression of dehydration-inducible genes. Promotes the production of lipid peroxidation by drought stress thus leading to malondialdehyde (MDA) synthesis. Prevents pollen tube elongation. Necessary for RZF1 expression in seedlings. This Arabidopsis thaliana (Mouse-ear cress) protein is Protein PROLINE CONTENT ALTERNATIVE 22.